The chain runs to 128 residues: Large ribosomal subunit protein bL12c (128 aa).

Belongs to the bacterial ribosomal protein bL12 family. Homodimer. Part of the ribosomal stalk of the 50S ribosomal subunit. Forms a multimeric L10(L12)X complex, where L10 forms an elongated spine to which 2 to 4 L12 dimers bind in a sequential fashion. Binds GTP-bound translation factors.

Its subcellular location is the plastid. It localises to the chloroplast. Functionally, forms part of the ribosomal stalk which helps the ribosome interact with GTP-bound translation factors. Is thus essential for accurate translation. This is Large ribosomal subunit protein bL12c from Phaeodactylum tricornutum (strain CCAP 1055/1).